Reading from the N-terminus, the 307-residue chain is Acetaldehyde dehydrogenase 2 (307 aa).

Residue 13–16 participates in NAD(+) binding; it reads SGNI. Cys132 functions as the Acyl-thioester intermediate in the catalytic mechanism. Residues 163-171 and Asn274 each bind NAD(+); that span reads SIGPGTRAN.

The protein belongs to the acetaldehyde dehydrogenase family.

The enzyme catalyses acetaldehyde + NAD(+) + CoA = acetyl-CoA + NADH + H(+). The protein is Acetaldehyde dehydrogenase 2 of Methylibium petroleiphilum (strain ATCC BAA-1232 / LMG 22953 / PM1).